The following is a 537-amino-acid chain: Nedd4 binding protein 3 (537 aa).

A Phosphoserine modification is found at Ser172. Disordered regions lie at residues 173–234 (LDEG…VLSC), 327–359 (RKELRAQQGLAPEPRTSGPPMEADPNARPEEEA), and 422–456 (LQEQAPREEAPGSCETDDCKSRGLLGEAGGNEARE). Residues 178-207 (PEPSLSDSSSGGSFGRSPGTGPSPFSSSLG) are compositionally biased toward low complexity. The stretch at 295–523 (VDRLHEVAQK…LEQELRVLRE (229 aa)) forms a coiled coil.

It belongs to the N4BP3 family. Binds NEDD4. Interacts with 14-3-3 proteins. Interacts with MAVS.

Its subcellular location is the cytoplasmic vesicle. It is found in the cell projection. It localises to the axon. The protein resides in the dendrite. Plays a positive role in the antiviral innate immune signaling pathway. Mechanistically, interacts with MAVS and functions as a positive regulator to promote 'Lys-63'-linked polyubiquitination of MAVS and thus strengthens the interaction between MAVS and TRAF2. Also plays a role in axon and dendrite arborization during cranial nerve development. May also be important for neural crest migration and early development of other anterior structures including eye, brain and cranial cartilage. The sequence is that of Nedd4 binding protein 3 from Rattus norvegicus (Rat).